We begin with the raw amino-acid sequence, 204 residues long: Large ribosomal subunit protein uL22m (204 aa).

The transit peptide at 1–27 (MAASITASVWGTLLKIHRGLTASGCLP) directs the protein to the mitochondrion.

The protein belongs to the universal ribosomal protein uL22 family. Component of the mitochondrial ribosome large subunit (39S) which comprises a 16S rRNA and about 50 distinct proteins.

Its subcellular location is the mitochondrion. This chain is Large ribosomal subunit protein uL22m (mrpl22), found in Xenopus tropicalis (Western clawed frog).